The sequence spans 326 residues: Protease HtpX homolog (326 aa).

2 helical membrane-spanning segments follow: residues 10-30 (LNMA…ALAV) and 41-61 (VGLM…QWLF). His147 lines the Zn(2+) pocket. Glu148 is a catalytic residue. Residue His151 coordinates Zn(2+). Transmembrane regions (helical) follow at residues 159-179 (LLMA…WIFW) and 197-217 (LLFL…LLVL). A Zn(2+)-binding site is contributed by Glu224.

Belongs to the peptidase M48B family. Zn(2+) serves as cofactor.

It localises to the cell membrane. The polypeptide is Protease HtpX homolog (Saccharolobus islandicus (strain Y.N.15.51 / Yellowstone #2) (Sulfolobus islandicus)).